The sequence spans 305 residues: MPSSSNSAAFSLDEFAKALDKHDYHAEKGQTVHGKICQHANEGVYVDFGGKSPGFVPVQELGLRPHAEIEDSFPLDSAWDFLVTSEQNDEGQVRLSRRQLQIQQSWENLAELEESGKTLEMVVTGTNKGGVVGDVEGLRGFIPRSHLMHKDNMDALVGQVLKAHILEANQDNNKLVLTQRRIQQAESMGKIAAGNIYEGKVAKIQPYGVFVEIEGVTGLLHVSQVSGTRVDSLNTLFAFGQAISVYVQEIDEYKNRISLSTRILETYPGELVEKFDEMMADAPNRLPLVQSKQNLGDKQEQLEKS.

3 S1 motif domains span residues G29 to R98, G116 to R180, and G194 to R262.

It belongs to the bacterial ribosomal protein bS1 family.

Its function is as follows. Binds mRNA. The polypeptide is Small ribosomal subunit protein bS1B (rps1b) (Synechocystis sp. (strain ATCC 27184 / PCC 6803 / Kazusa)).